We begin with the raw amino-acid sequence, 289 residues long: CBY1-interacting BAR domain-containing protein 1 (289 aa).

The transit peptide at 1 to 47 (MMRRTLENRNAQTKQLQTAVSNVEKHFGELCQIFAAYVRKTARLRDK) directs the protein to the mitochondrion. Positions 10 to 220 (NAQTKQLQTA…NIDEDEDLEV (211 aa)) are BAR-like. Positions 107-178 (KMKRDDLKAT…INNFERQKMK (72 aa)) form a coiled coil. The segment at 265–289 (LRKDQQAEDDEDDELDVTEEENFLK) is disordered. Positions 271–289 (AEDDEDDELDVTEEENFLK) are enriched in acidic residues.

The protein belongs to the CIBAR family. Homodimer (via BAR-like domain). Heterodimer with FAM92B (via BAR-like domains). Interacts (via BAR-like domain) with CBY1; this interaction is required for targeting FAM92A to centriole and cilium basal body. Interacts (via BAR-like domain) with CBY3; both proteins form a ninefold symmetric structure at the flagellar base; are recruited to the annulus in a mutually dependent manner and regulate annulus positionning.

The protein localises to the cytoplasm. It is found in the cytoskeleton. Its subcellular location is the microtubule organizing center. The protein resides in the centrosome. It localises to the centriole. The protein localises to the cilium basal body. It is found in the cell projection. Its subcellular location is the cilium. The protein resides in the nucleus. It localises to the mitochondrion inner membrane. The protein localises to the flagellum. Functionally, plays a critical role in regulating mitochondrial ultrastructure and function by maintaining the integrity of mitochondrial morphology, particularly the organization of cristae. Preferentially binds to negatively charged phospholipids like cardiolipin and phosphatidylinositol 4,5-bisphosphate enhancing its interaction with mitochondrial membranes. Induces membrane curvature and tubulation, which are critical for maintaining mitochondrial ultrastructure and the organization of cristae. Plays a crucial role in ciliogenesis. May play a role in limb development through its role in ciliogenesis. Plays a key role in the correct positioning of the annulus, a septin-based ring structure in the sperm flagellum, serving both as a physical barrier and a membrane diffusion barrier that separates the midpiece (MP) from the principal piece (PP). This positioning is essential for proper sperm motility and function. Interacts with CBY3 to form a complex which localizes to the curved membrane region of the flagellar pocket. By doing so, may provide stability and rigidity to the periannular membrane to prevent membrane deformation. This function is crucial for halting annulus migration at the proximal end of the fibrous sheath-containing PP. This chain is CBY1-interacting BAR domain-containing protein 1, found in Homo sapiens (Human).